A 478-amino-acid chain; its full sequence is Membrane-bound lytic murein transglycosylase F (478 aa).

A signal peptide spans 1–29; that stretch reads MFPDSSYLFSMRSLSRFLIAIFGCGALLA. The segment at 30–269 is non-LT domain; the sequence is SCDSFERSVL…RLLDRYYGHI (240 aa). The LT domain stretch occupies residues 271 to 478; the sequence is RLHHTDVNGI…RKEDDSWQEF (208 aa). Glu-316 is a catalytic residue.

It in the N-terminal section; belongs to the bacterial solute-binding protein 3 family. In the C-terminal section; belongs to the transglycosylase Slt family.

The protein resides in the cell outer membrane. The catalysed reaction is Exolytic cleavage of the (1-&gt;4)-beta-glycosidic linkage between N-acetylmuramic acid (MurNAc) and N-acetylglucosamine (GlcNAc) residues in peptidoglycan, from either the reducing or the non-reducing ends of the peptidoglycan chains, with concomitant formation of a 1,6-anhydrobond in the MurNAc residue.. In terms of biological role, murein-degrading enzyme that degrades murein glycan strands and insoluble, high-molecular weight murein sacculi, with the concomitant formation of a 1,6-anhydromuramoyl product. Lytic transglycosylases (LTs) play an integral role in the metabolism of the peptidoglycan (PG) sacculus. Their lytic action creates space within the PG sacculus to allow for its expansion as well as for the insertion of various structures such as secretion systems and flagella. The sequence is that of Membrane-bound lytic murein transglycosylase F from Nitrosospira multiformis (strain ATCC 25196 / NCIMB 11849 / C 71).